We begin with the raw amino-acid sequence, 553 residues long: Cytochrome P450 86A22 (553 aa).

Residues 8–24 (MIVAIVAAYLLWFKSIT) form a helical membrane-spanning segment. Cys459 lines the heme pocket.

This sequence belongs to the cytochrome P450 family. Heme serves as cofactor. Mostly expressed in the developing stigma of floral buds. Weakly detected in leaves, stems and flowers.

Its subcellular location is the membrane. The catalysed reaction is (9Z)-octadecenoyl-CoA + reduced [NADPH--hemoprotein reductase] + O2 = (9Z)-18-hydroxyoctadecenoyl-CoA + oxidized [NADPH--hemoprotein reductase] + H2O + H(+). The enzyme catalyses (9Z,12Z)-octadecadienoyl-CoA + reduced [NADPH--hemoprotein reductase] + O2 = (9Z,12Z)-18-hydroxyoctadecadienoyl-CoA + oxidized [NADPH--hemoprotein reductase] + H2O + H(+). In terms of biological role, fatty acyl-CoA omega-hydroxylase essential for the production of omega-hydroxy fatty acids and the biosynthesis of triacylglycerol-/diacylglycerol-based estolide polyesters in the stigma. Substrate preference is 16:0-CoA &gt; 18:1-CoA &gt; 18:0-CoA. This Petunia hybrida (Petunia) protein is Cytochrome P450 86A22.